Reading from the N-terminus, the 258-residue chain is Imidazole glycerol phosphate synthase subunit HisF (258 aa).

Residues Asp11 and Asp130 contribute to the active site.

It belongs to the HisA/HisF family. In terms of assembly, heterodimer of HisH and HisF.

It is found in the cytoplasm. It catalyses the reaction 5-[(5-phospho-1-deoxy-D-ribulos-1-ylimino)methylamino]-1-(5-phospho-beta-D-ribosyl)imidazole-4-carboxamide + L-glutamine = D-erythro-1-(imidazol-4-yl)glycerol 3-phosphate + 5-amino-1-(5-phospho-beta-D-ribosyl)imidazole-4-carboxamide + L-glutamate + H(+). Its pathway is amino-acid biosynthesis; L-histidine biosynthesis; L-histidine from 5-phospho-alpha-D-ribose 1-diphosphate: step 5/9. IGPS catalyzes the conversion of PRFAR and glutamine to IGP, AICAR and glutamate. The HisF subunit catalyzes the cyclization activity that produces IGP and AICAR from PRFAR using the ammonia provided by the HisH subunit. The polypeptide is Imidazole glycerol phosphate synthase subunit HisF (Haemophilus influenzae (strain 86-028NP)).